The following is a 101-amino-acid chain: Large ribosomal subunit protein uL23 (101 aa).

The protein belongs to the universal ribosomal protein uL23 family. In terms of assembly, part of the 50S ribosomal subunit. Contacts protein L29, and trigger factor when it is bound to the ribosome.

One of the early assembly proteins it binds 23S rRNA. One of the proteins that surrounds the polypeptide exit tunnel on the outside of the ribosome. Forms the main docking site for trigger factor binding to the ribosome. This Haemophilus ducreyi (strain 35000HP / ATCC 700724) protein is Large ribosomal subunit protein uL23.